Consider the following 350-residue polypeptide: Protein YIPF3 (350 aa).

Residues 1–10 show a composition bias toward low complexity; that stretch reads MATTAAPAGG. The segment at 1–51 is disordered; it reads MATTAAPAGGARNGAGPEWGGFEENIQGGGSAVIDMENMDDTSGSSFEDMG. Alanine 2 is modified (N-acetylalanine). Topologically, residues 2 to 148 are cytoplasmic; that stretch reads ATTAAPAGGA…PIKMVNFPQK (147 aa). A helical transmembrane segment spans residues 149–169; the sequence is IAGELYGPLMLVFTLVAILLH. The Lumenal segment spans residues 170-187; the sequence is GMKTSDTIIREGTLMGTA. Residues 188 to 208 form a helical membrane-spanning segment; sequence IGTCFGYWLGVSSFIYFLAYL. At 209–214 the chain is on the cytoplasmic side; that stretch reads CNAQIT. The chain crosses the membrane as a helical span at residues 215 to 237; sequence MLQMLALLGYGLFGHCIVLFITY. Topologically, residues 238 to 240 are lumenal; sequence NIH. Residues 241–263 form a helical membrane-spanning segment; that stretch reads LHALFYLFWLLVGGLSTLRMVAV. Over 264 to 274 the chain is Cytoplasmic; the sequence is LVSRTVGPTQR. The helical transmembrane segment at 275–295 threads the bilayer; it reads LLLCGTLAALHMLFLLYLHFA. Topologically, residues 296–350 are lumenal; it reads YHKVVEGILDTLEGPNIPPIQRVPRDIPAMLPAARLPTTVLNATAKAVAVTLQSH. O-linked (GalNAc...) threonine glycans are attached at residues threonine 333 and threonine 334. A glycan (N-linked (GlcNAc...) asparagine) is linked at asparagine 337. Residues threonine 339 and threonine 346 are each glycosylated (O-linked (GalNAc...) threonine).

The protein belongs to the YIP1 family. As to quaternary structure, interacts with YIPF4 and YIPF5. N-glycosylated in the ER (40 kDa form I), then O-glycosylated in the Golgi apparatus (46 kDa form II), the C-terminal lumenal region is later removed in the Golgi apparatus to produce a 36 kDa form III. O-glycosylated with core 1-like and core 2-like glycans. O-glycan heterogeneity at Thr-346: HexNAc (minor), HexHexNAc (major), Hex1HexNAc2 (minor), Hex2HexNAc2 (minor) and dHex1Hex2HexNAc2 (minor). As to expression, expressed by nucleated hematopoietic cells (at protein level).

The protein resides in the cell membrane. It localises to the cytoplasm. The protein localises to the golgi apparatus. Its subcellular location is the cis-Golgi network membrane. Its function is as follows. Involved in the maintenance of the Golgi structure. May play a role in hematopoiesis. This is Protein YIPF3 (YIPF3) from Homo sapiens (Human).